The following is a 561-amino-acid chain: Excitatory amino acid transporter 4 (561 aa).

Residues M1–R52 are Cytoplasmic-facing. The residue at position 2 (S2) is a Phosphoserine. Transmembrane regions (helical) follow at residues N53–L73, M96–L116, and V130–I150. N-linked (GlcNAc...) asparagine glycosylation is found at N213, N229, and N236. Transmembrane regions (helical) follow at residues S259 to M282, F292 to I319, and L341 to V362. Positions F368–L398 form an intramembrane region, discontinuously helical. S385–S387 is an L-aspartate binding site. The chain crosses the membrane as a helical span at residues I408 to F434. The Na(+) site is built by G416, T418, and N420. L-aspartate-binding positions include T424, I465–G469, D498, and N505. The segment at residues I448 to G481 is an intramembrane region (discontinuously helical). Residues W495 to I516 form a helical membrane-spanning segment. Na(+) is bound by residues N505 and D509.

This sequence belongs to the dicarboxylate/amino acid:cation symporter (DAACS) (TC 2.A.23) family. SLC1A6 subfamily. Homotrimer.

It localises to the cell membrane. It carries out the reaction K(+)(in) + L-glutamate(out) + 3 Na(+)(out) + H(+)(out) = K(+)(out) + L-glutamate(in) + 3 Na(+)(in) + H(+)(in). The catalysed reaction is K(+)(in) + L-aspartate(out) + 3 Na(+)(out) + H(+)(out) = K(+)(out) + L-aspartate(in) + 3 Na(+)(in) + H(+)(in). It catalyses the reaction D-aspartate(out) + K(+)(in) + 3 Na(+)(out) + H(+)(out) = D-aspartate(in) + K(+)(out) + 3 Na(+)(in) + H(+)(in). Sodium-dependent, high-affinity amino acid transporter that mediates the uptake of L-glutamate and also L-aspartate and D-aspartate. Functions as a symporter that transports one amino acid molecule together with two or three Na(+) ions and one proton, in parallel with the counter-transport of one K(+) ion. Mediates Cl(-) flux that is not coupled to amino acid transport; this avoids the accumulation of negative charges due to aspartate and Na(+) symport. Plays a redundant role in the rapid removal of released glutamate from the synaptic cleft, which is essential for terminating the postsynaptic action of glutamate. This Rattus norvegicus (Rat) protein is Excitatory amino acid transporter 4 (Slc1a6).